Reading from the N-terminus, the 632-residue chain is Probable potassium transport system protein Kup 1 (632 aa).

The next 12 membrane-spanning stretches (helical) occupy residues 17–37, 60–80, 106–126, 144–164, 175–195, 210–230, 254–274, 292–312, 344–364, 370–390, 401–421, and 426–446; these read LFYLALGSVGVVYGDIGTSPL, LISLMIWALTIIVTIKYVLFL, TALLMLLGLMGAALFLGDAMI, PSLAEYIVPISVVILALLFVV, FFGPITAVWFLVMAAAGISHI, AVSFLLHEGFYGVVVLGAVFL, WFLLVFPALTLNYLGQGALVL, ALLPVVILATAATIIASQAVI, IFLPSVNAVLFFGVIFLVLSF, LATAYGISVTGAMVVTSIMAF, LPVAVIALAPLVVLEMIFLGA, and IHDGGYIPILIATAFTVVMWT.

The protein belongs to the HAK/KUP transporter (TC 2.A.72) family.

The protein localises to the cell inner membrane. It carries out the reaction K(+)(in) + H(+)(in) = K(+)(out) + H(+)(out). Functionally, transport of potassium into the cell. Likely operates as a K(+):H(+) symporter. In Rhizobium etli (strain ATCC 51251 / DSM 11541 / JCM 21823 / NBRC 15573 / CFN 42), this protein is Probable potassium transport system protein Kup 1.